The chain runs to 298 residues: Spermidine synthase (298 aa).

The PABS domain occupies 13 to 248; the sequence is DGWFREINNM…GSIGFVVASK (236 aa). Gln44 is an S-adenosyl 3-(methylsulfanyl)propylamine binding site. Tyr74 is a binding site for putrescine. S-adenosyl 3-(methylsulfanyl)propylamine-binding positions include Gln75, Asp99, Asp119, 150–151, and Asp168; that span reads DG. The active-site Proton acceptor is the Asp168. Residues 168-171 and Tyr236 each bind putrescine; that span reads DSSD.

This sequence belongs to the spermidine/spermine synthase family.

It carries out the reaction S-adenosyl 3-(methylsulfanyl)propylamine + putrescine = S-methyl-5'-thioadenosine + spermidine + H(+). It participates in amine and polyamine biosynthesis; spermidine biosynthesis; spermidine from putrescine: step 1/1. The chain is Spermidine synthase from Schizosaccharomyces pombe (strain 972 / ATCC 24843) (Fission yeast).